Consider the following 35-residue polypeptide: Beta/omega-theraphotoxin-Bp1a (35 aa).

3 disulfide bridges follow: Cys2–Cys16, Cys9–Cys21, and Cys15–Cys28.

It belongs to the neurotoxin 10 (Hwtx-1) family. 54 (ProTx-1) subfamily. Post-translationally, an unnatural amidation at Ser-35 provokes a 14-fold increased toxin ability to inhibit Nav1.2/SCN2A and a ~2-fold decreased toxin ability to inhibit both Nav1.5/SCN5A and Nav1.7/SCN9A. As to expression, expressed by the venom gland.

Its subcellular location is the secreted. Functionally, ion channel impairing toxin that inhibits voltage-gated calcium channel Cav3.1/CACNA1G (IC(50)=53 nM), voltage-gated potassium channels Kv2.1/KCNB1 (IC(50)=411 nM), all sodium channels tested (Nav1.2/SCN2A (IC(50)=60-104 nM), Nav1.5/SCN5A (IC(50)=76-358 nM), Nav1.6/SCN8A (IC(50)=21-133 nM), Nav1.7/SCN9A (IC(50)=51-95 nM), and Nav1.8/SCN10A) as well as the nociceptor cation channel TRPA1 (IC(50)=389 nM). Acts as a potent and selective blocker of voltage-gated calcium channel Cav3.1/CACNA1G, but not of Cav3.2/CACNA1H, and Cav3.3/CACNA1I. On Nav1.7/SCN9A, primarily interacts with the DII and DIV voltage-sensor domains. Also acts as an inhibitor of nociceptor cation channel TRPA1 (IC(50)~389 nM) by binding to the S1-S4 gating domain of TRPA1. It shows moderate affinity for lipid bilayers. The polypeptide is Beta/omega-theraphotoxin-Bp1a (Bumba pulcherrimaklaasi (Tarantula spider)).